The sequence spans 95 residues: Enhancer of yellow 2b transcription factor (95 aa).

This sequence belongs to the ENY2 family. As to expression, expressed specifically in testis.

Functionally, testis-specific paralog of the ubiquitously expressed transcription and mRNA export factor e(y)2. Cannot functionally replace e(y)2. The sequence is that of Enhancer of yellow 2b transcription factor (e(y)2b) from Drosophila melanogaster (Fruit fly).